We begin with the raw amino-acid sequence, 22 residues long: Cysteine-rich venom protein collettin-a (22 aa).

The span at 1-15 shows a compositional bias: basic and acidic residues; that stretch reads SNKKNYQKEIVDKHN. Positions 1 to 22 are disordered; that stretch reads SNKKNYQKEIVDKHNALRRSVK.

Belongs to the CRISP family. In terms of processing, contains 8 disulfide bonds. Expressed by the venom gland.

The protein resides in the secreted. The polypeptide is Cysteine-rich venom protein collettin-a (Pseudechis colletti (Collett's snake)).